A 220-amino-acid polypeptide reads, in one-letter code: Ribonuclease HII (220 aa).

In terms of domain architecture, RNase H type-2 spans 32–220; that stretch reads KHIAGIDEAG…FAPIKGRFDC (189 aa). 3 residues coordinate a divalent metal cation: aspartate 38, glutamate 39, and aspartate 130.

It belongs to the RNase HII family. The cofactor is Mn(2+). Mg(2+) is required as a cofactor.

Its subcellular location is the cytoplasm. The catalysed reaction is Endonucleolytic cleavage to 5'-phosphomonoester.. Endonuclease that specifically degrades the RNA of RNA-DNA hybrids. The sequence is that of Ribonuclease HII from Brucella ovis (strain ATCC 25840 / 63/290 / NCTC 10512).